Reading from the N-terminus, the 358-residue chain is Methylthioribose-1-phosphate isomerase (358 aa).

Substrate contacts are provided by residues 54-56, R96, and Q205; that span reads RGA. The Proton donor role is filled by D246. Residue 256–257 participates in substrate binding; the sequence is NK.

This sequence belongs to the eIF-2B alpha/beta/delta subunits family. MtnA subfamily.

The catalysed reaction is 5-(methylsulfanyl)-alpha-D-ribose 1-phosphate = 5-(methylsulfanyl)-D-ribulose 1-phosphate. The protein operates within amino-acid biosynthesis; L-methionine biosynthesis via salvage pathway; L-methionine from S-methyl-5-thio-alpha-D-ribose 1-phosphate: step 1/6. Its function is as follows. Catalyzes the interconversion of methylthioribose-1-phosphate (MTR-1-P) into methylthioribulose-1-phosphate (MTRu-1-P). The chain is Methylthioribose-1-phosphate isomerase from Pseudomonas syringae pv. syringae (strain B728a).